Here is a 336-residue protein sequence, read N- to C-terminus: Iron-uptake system permease protein FeuC (336 aa).

The next 9 membrane-spanning stretches (helical) occupy residues 7–27 (LFIA…SFSV), 57–77 (VVMA…IQAI), 85–105 (PGIL…MLLF), 120–140 (MPLF…IFAW), 150–170 (IILV…FLSL), 191–211 (ANWT…PILI), 246–266 (VAII…GLIA), 280–300 (YILP…DFAG), and 308–328 (EVPA…YLLF).

It belongs to the binding-protein-dependent transport system permease family. FecCD subfamily. The complex is composed of one ATP-binding protein (YusV), two transmembrane proteins (FeuB and FeuC) and a solute-binding protein (FeuA).

It is found in the cell membrane. Its function is as follows. Involved in the uptake of iron. Probably responsible for the translocation of the substrate across the membrane. In terms of biological role, part of the ABC transporter complex FeuABC/YusV involved in import of the catecholate siderophores bacillibactin and enterobactin. The protein is Iron-uptake system permease protein FeuC (feuC) of Bacillus subtilis (strain 168).